The sequence spans 341 residues: Phenylalanine--tRNA ligase alpha subunit (341 aa).

Glu254 is a binding site for Mg(2+).

Belongs to the class-II aminoacyl-tRNA synthetase family. Phe-tRNA synthetase alpha subunit type 1 subfamily. Tetramer of two alpha and two beta subunits. Requires Mg(2+) as cofactor.

Its subcellular location is the cytoplasm. It catalyses the reaction tRNA(Phe) + L-phenylalanine + ATP = L-phenylalanyl-tRNA(Phe) + AMP + diphosphate + H(+). This is Phenylalanine--tRNA ligase alpha subunit from Chlorobaculum parvum (strain DSM 263 / NCIMB 8327) (Chlorobium vibrioforme subsp. thiosulfatophilum).